A 547-amino-acid polypeptide reads, in one-letter code: Peptide chain release factor 3 (547 aa).

Positions 24 to 294 (DRRRNFAIIS…AFLQYAAKPE (271 aa)) constitute a tr-type G domain. Residues 33–40 (SHPDAGKT), 101–105 (DTPGH), and 155–158 (NKLD) contribute to the GTP site.

This sequence belongs to the TRAFAC class translation factor GTPase superfamily. Classic translation factor GTPase family. PrfC subfamily.

It localises to the cytoplasm. In terms of biological role, increases the formation of ribosomal termination complexes and stimulates activities of RF-1 and RF-2. It binds guanine nucleotides and has strong preference for UGA stop codons. It may interact directly with the ribosome. The stimulation of RF-1 and RF-2 is significantly reduced by GTP and GDP, but not by GMP. This Synechocystis sp. (strain ATCC 27184 / PCC 6803 / Kazusa) protein is Peptide chain release factor 3 (prfC).